The chain runs to 233 residues: Protein Mis18-alpha (233 aa).

S36, S39, and S40 each carry phosphoserine. The 99-residue stretch at 80–178 (PLVFLCSGCR…NVEAVESYVL (99 aa)) folds into the Mis18 domain. Residues C85, C88, C141, and C144 each coordinate Zn(2+). Residue K162 forms a Glycyl lysine isopeptide (Lys-Gly) (interchain with G-Cter in SUMO2) linkage. S233 carries the phosphoserine modification.

It belongs to the mis18 family. Homodimer, and heterodimer with OIP5/MIS18B. Identified in a complex containing MIS18A, OIP5/MIS18B, MIS18BP1, RBBP7 and RBBP4.

The protein localises to the nucleus. It is found in the chromosome. The protein resides in the centromere. In terms of biological role, required for recruitment of CENPA to centromeres and normal chromosome segregation during mitosis. The chain is Protein Mis18-alpha (MIS18A) from Plecturocebus moloch (Dusky titi monkey).